The chain runs to 264 residues: Putative hydro-lyase RBAM_004300 (264 aa).

It belongs to the D-glutamate cyclase family.

The protein is Putative hydro-lyase RBAM_004300 of Bacillus velezensis (strain DSM 23117 / BGSC 10A6 / LMG 26770 / FZB42) (Bacillus amyloliquefaciens subsp. plantarum).